A 41-amino-acid chain; its full sequence is Large ribosomal subunit protein bL36 (41 aa).

The protein belongs to the bacterial ribosomal protein bL36 family.

The chain is Large ribosomal subunit protein bL36 from Rickettsia canadensis (strain McKiel).